Here is a 404-residue protein sequence, read N- to C-terminus: Cysteine desulfurase IscS (404 aa).

Pyridoxal 5'-phosphate-binding positions include 75–76, asparagine 155, glutamine 183, and 203–205; these read AT and SAH. Position 206 is an N6-(pyridoxal phosphate)lysine (lysine 206). Threonine 243 provides a ligand contact to pyridoxal 5'-phosphate. The active-site Cysteine persulfide intermediate is the cysteine 328. Residue cysteine 328 participates in [2Fe-2S] cluster binding.

The protein belongs to the class-V pyridoxal-phosphate-dependent aminotransferase family. NifS/IscS subfamily. As to quaternary structure, homodimer. Forms a heterotetramer with IscU, interacts with other sulfur acceptors. Requires pyridoxal 5'-phosphate as cofactor.

The protein localises to the cytoplasm. The catalysed reaction is (sulfur carrier)-H + L-cysteine = (sulfur carrier)-SH + L-alanine. It participates in cofactor biosynthesis; iron-sulfur cluster biosynthesis. Its function is as follows. Master enzyme that delivers sulfur to a number of partners involved in Fe-S cluster assembly, tRNA modification or cofactor biosynthesis. Catalyzes the removal of elemental sulfur atoms from cysteine to produce alanine. Functions as a sulfur delivery protein for Fe-S cluster synthesis onto IscU, an Fe-S scaffold assembly protein, as well as other S acceptor proteins. This Pseudomonas fluorescens (strain SBW25) protein is Cysteine desulfurase IscS.